The following is a 387-amino-acid chain: Cystathionine gamma-lyase (387 aa).

The substrate site is built by arginine 53, tyrosine 105, and arginine 110. At lysine 202 the chain carries N6-(pyridoxal phosphate)lysine. Glutamate 329 contacts substrate.

Belongs to the trans-sulfuration enzymes family. Homotetramer. Interacts with CALM in a calcium-dependent manner. Pyridoxal 5'-phosphate is required as a cofactor.

The protein localises to the cytoplasm. It carries out the reaction L,L-cystathionine + H2O = 2-oxobutanoate + L-cysteine + NH4(+). It catalyses the reaction L-cysteine + H2O = hydrogen sulfide + pyruvate + NH4(+) + H(+). The enzyme catalyses L-homocysteine + H2O = 2-oxobutanoate + hydrogen sulfide + NH4(+) + H(+). The catalysed reaction is L-homoserine = 2-oxobutanoate + NH4(+). It functions in the pathway amino-acid biosynthesis; L-cysteine biosynthesis; L-cysteine from L-homocysteine and L-serine: step 2/2. Functionally, catalyzes the last step in the trans-sulfuration pathway from L-methionine to L-cysteine in a pyridoxal-5'-phosphate (PLP)-dependent manner, which consists on cleaving the L,L-cystathionine molecule into L-cysteine, ammonia and 2-oxobutanoate. Part of the L-cysteine derived from the trans-sulfuration pathway is utilized for biosynthesis of the ubiquitous antioxidant glutathione. Besides its role in the conversion of L-cystathionine into L-cysteine, it utilizes L-cysteine and L-homocysteine as substrates (at much lower rates than L,L-cystathionine) to produce the endogenous gaseous signaling molecule hydrogen sulfide (H2S). The chain is Cystathionine gamma-lyase (cysA) from Dictyostelium discoideum (Social amoeba).